The primary structure comprises 314 residues: D-alanine--D-alanine ligase (314 aa).

The ATP-grasp domain occupies 115–310 (KQVWQSVGLV…FNELVLEILA (196 aa)). 141-196 (LDSLGGQGFVKPAHEGSSIGMSVVSTAQELKAAYEKAAHYDAKVLVERRIVGREFT) is a binding site for ATP. Residues D264, E277, and N279 each contribute to the Mg(2+) site.

The protein belongs to the D-alanine--D-alanine ligase family. The cofactor is Mg(2+). Mn(2+) serves as cofactor.

The protein resides in the cytoplasm. The enzyme catalyses 2 D-alanine + ATP = D-alanyl-D-alanine + ADP + phosphate + H(+). The protein operates within cell wall biogenesis; peptidoglycan biosynthesis. Its function is as follows. Cell wall formation. The chain is D-alanine--D-alanine ligase from Saccharophagus degradans (strain 2-40 / ATCC 43961 / DSM 17024).